The chain runs to 195 residues: MNFAEVLLERKLLLIGSFVLTSGKVSPYYLDLRPLPNYPEFYDIVNQAIKKAKDIPHDIIVGIATGGVPLSAFIACNLKEPMGYIRIEKKGHGTNRTLELDVKGKRVLLVDDVATTGVSIEKATLEILNGGGKVSDALVIIDRQEGASQRLEKLGVKLHSLFKISEILDELLKSDKLKDNEKKSILDYLVKNVEK.

Residues R86, K90, H92, and 111-119 (DDVATTGVS) contribute to the 5-phospho-alpha-D-ribose 1-diphosphate site. Orotate contacts are provided by T115 and R143.

Belongs to the purine/pyrimidine phosphoribosyltransferase family. PyrE subfamily. Homodimer. It depends on Mg(2+) as a cofactor.

The enzyme catalyses orotidine 5'-phosphate + diphosphate = orotate + 5-phospho-alpha-D-ribose 1-diphosphate. It functions in the pathway pyrimidine metabolism; UMP biosynthesis via de novo pathway; UMP from orotate: step 1/2. In terms of biological role, catalyzes the transfer of a ribosyl phosphate group from 5-phosphoribose 1-diphosphate to orotate, leading to the formation of orotidine monophosphate (OMP). This chain is Orotate phosphoribosyltransferase, found in Saccharolobus solfataricus (strain ATCC 35092 / DSM 1617 / JCM 11322 / P2) (Sulfolobus solfataricus).